A 400-amino-acid polypeptide reads, in one-letter code: Argininosuccinate synthase (400 aa).

8-16 (AYSGGLDTS) is a binding site for ATP. Tyr87 contributes to the L-citrulline binding site. Gly117 provides a ligand contact to ATP. Residues Thr119, Asn123, and Asp124 each coordinate L-aspartate. Residue Asn123 coordinates L-citrulline. Residues Arg127, Ser175, Glu260, and Tyr272 each contribute to the L-citrulline site.

It belongs to the argininosuccinate synthase family. Type 1 subfamily. Homotetramer.

The protein localises to the cytoplasm. The enzyme catalyses L-citrulline + L-aspartate + ATP = 2-(N(omega)-L-arginino)succinate + AMP + diphosphate + H(+). It participates in amino-acid biosynthesis; L-arginine biosynthesis; L-arginine from L-ornithine and carbamoyl phosphate: step 2/3. This chain is Argininosuccinate synthase, found in Nocardia farcinica (strain IFM 10152).